Here is a 421-residue protein sequence, read N- to C-terminus: Probable tRNA N6-adenosine threonylcarbamoyltransferase, mitochondrial (421 aa).

A mitochondrion-targeting transit peptide spans 1–22 (MNIPKILNNNLVLKRIFCRNYS). A divalent metal cation-binding residues include H133 and H137. Residues 156 to 160 (LLSGG), D189, G208, E212, 308 to 309 (AN), and T336 each bind substrate. D337 is an a divalent metal cation binding site.

This sequence belongs to the KAE1 / TsaD family. As to quaternary structure, homodimer. A divalent metal cation is required as a cofactor.

It localises to the mitochondrion. It catalyses the reaction L-threonylcarbamoyladenylate + adenosine(37) in tRNA = N(6)-L-threonylcarbamoyladenosine(37) in tRNA + AMP + H(+). In terms of biological role, required for the formation of a threonylcarbamoyl group on adenosine at position 37 (t(6)A37) in mitochondrial tRNAs that read codons beginning with adenine. Probably involved in the transfer of the threonylcarbamoyl moiety of threonylcarbamoyl-AMP (TC-AMP) to the N6 group of A37. Involved in mitochondrial genome maintenance. This is Probable tRNA N6-adenosine threonylcarbamoyltransferase, mitochondrial from Caenorhabditis elegans.